Consider the following 410-residue polypeptide: Secreted protein PRY1 (410 aa).

The first 20 residues, 1-20, serve as a signal peptide directing secretion; it reads MKQNYILSIILCYLLANVHS. Disordered stretches follow at residues 64–86, 102–132, and 148–260; these read PAPV…STPS, SDSD…SSSS, and SSSS…SSSS. Positions 148–179 are enriched in low complexity; it reads SSSSTPSSISQQQQQQQGSPASGSNSPNSAQP. The segment covering 197-211 has biased composition (gly residues); the sequence is SGLGSGFGSGFGSGS. Residues 212 to 260 show a composition bias toward low complexity; it reads GSDSDSGSGLPSASSSTIIQQQPSSSNIGSSSTSSSSSSSSSSSSSSSS. In terms of domain architecture, SCP spans 283 to 394; sequence LDAHNKYRAQ…NWGLYVVCEY (112 aa).

The protein belongs to the CRISP family.

The protein localises to the secreted. Secreted protein that acts as a virulence factor during infections. The sequence is that of Secreted protein PRY1 (PRY1) from Candida albicans (strain SC5314 / ATCC MYA-2876) (Yeast).